A 610-amino-acid polypeptide reads, in one-letter code: Replication factor C large subunit (610 aa).

55–62 (GPAGIGKT) is a binding site for ATP. 3 stretches are compositionally biased toward basic and acidic residues: residues 467 to 478 (EKEGNASAEKPE), 502 to 515 (LPEKKRSSEMKLPE), and 594 to 603 (DGSKKAEPKN). Residues 467–610 (EKEGNASAEK…PKNQKTLFDF (144 aa)) are disordered.

This sequence belongs to the activator 1 small subunits family. RfcL subfamily. Heteromultimer composed of small subunits (RfcS) and large subunits (RfcL).

Functionally, part of the RFC clamp loader complex which loads the PCNA sliding clamp onto DNA. The protein is Replication factor C large subunit of Methanosarcina mazei (strain ATCC BAA-159 / DSM 3647 / Goe1 / Go1 / JCM 11833 / OCM 88) (Methanosarcina frisia).